A 53-amino-acid polypeptide reads, in one-letter code: MCTTLFLFSLAMLWRRRFTNRVEPEPSRVDGTVVGSGSDTDLQSTGREKGPVK.

A lipid anchor (S-palmitoyl cysteine) is attached at Cys-2. A disordered region spans residues 24 to 53 (PEPSRVDGTVVGSGSDTDLQSTGREKGPVK). The segment covering 35–45 (GSGSDTDLQST) has biased composition (polar residues).

It belongs to the PRCD family. As to quaternary structure, interacts with RHO/rhodopsin; the interaction promotes PRCD stability. In terms of processing, palmitoylated at Cys-2. Palmitoylation is essential for protein stability and trafficking to the photoreceptor outer segment, but does not appear to be essential for membrane localization. Probably palmitoylated by ZDHHC3. Phosphorylated. As to expression, expressed in retina, where it localizes to both rod and cone photoreceptors (at protein level).

The protein localises to the cell projection. It localises to the cilium. The protein resides in the photoreceptor outer segment. It is found in the membrane. Its subcellular location is the endoplasmic reticulum. The protein localises to the golgi apparatus. Involved in vision. This Mus musculus (Mouse) protein is Photoreceptor disk component PRCD.